Reading from the N-terminus, the 387-residue chain is Probable NADH-dependent butanol dehydrogenase 1 (387 aa).

Belongs to the iron-containing alcohol dehydrogenase family.

It functions in the pathway alcohol metabolism; butanol biosynthesis. This chain is Probable NADH-dependent butanol dehydrogenase 1 (yugJ), found in Bacillus subtilis (strain 168).